Consider the following 100-residue polypeptide: NADH-quinone oxidoreductase subunit K (100 aa).

The next 3 helical transmembrane spans lie at Tyr4 to Val24, Ile28 to Ala48, and Val60 to Ile80.

This sequence belongs to the complex I subunit 4L family. NDH-1 is composed of 14 different subunits. Subunits NuoA, H, J, K, L, M, N constitute the membrane sector of the complex.

It is found in the cell inner membrane. The enzyme catalyses a quinone + NADH + 5 H(+)(in) = a quinol + NAD(+) + 4 H(+)(out). Functionally, NDH-1 shuttles electrons from NADH, via FMN and iron-sulfur (Fe-S) centers, to quinones in the respiratory chain. The immediate electron acceptor for the enzyme in this species is believed to be ubiquinone. Couples the redox reaction to proton translocation (for every two electrons transferred, four hydrogen ions are translocated across the cytoplasmic membrane), and thus conserves the redox energy in a proton gradient. The protein is NADH-quinone oxidoreductase subunit K of Sulfurihydrogenibium azorense (strain DSM 15241 / OCM 825 / Az-Fu1).